A 591-amino-acid chain; its full sequence is Aspartate--tRNA ligase (591 aa).

An L-aspartate-binding site is contributed by Glu176. An aspartate region spans residues 200–203 (QILK). Arg222 is a binding site for L-aspartate. ATP is bound by residues 222-224 (RDE) and Gln231. His450 is a binding site for L-aspartate. Residue Glu484 coordinates ATP. Residue Arg491 coordinates L-aspartate. Residue 536–539 (GLDR) participates in ATP binding.

Belongs to the class-II aminoacyl-tRNA synthetase family. Type 1 subfamily. In terms of assembly, homodimer.

It localises to the cytoplasm. The catalysed reaction is tRNA(Asp) + L-aspartate + ATP = L-aspartyl-tRNA(Asp) + AMP + diphosphate. Catalyzes the attachment of L-aspartate to tRNA(Asp) in a two-step reaction: L-aspartate is first activated by ATP to form Asp-AMP and then transferred to the acceptor end of tRNA(Asp). This chain is Aspartate--tRNA ligase, found in Listeria monocytogenes serovar 1/2a (strain ATCC BAA-679 / EGD-e).